We begin with the raw amino-acid sequence, 329 residues long: Cathepsin K (329 aa).

Positions 1 to 15 (MWGLKVLLLPVMSFA) are cleaved as a signal peptide. Positions 16–114 (LYPEEILDTH…TLYIPDWEGR (99 aa)) are cleaved as a propeptide — activation peptide. The N-linked (GlcNAc...) asparagine glycan is linked to Asn-103. Disulfide bonds link Cys-136–Cys-177, Cys-170–Cys-210, and Cys-269–Cys-318. Residue Cys-139 is part of the active site. Active-site residues include His-276 and Asn-296.

The protein belongs to the peptidase C1 family.

The protein resides in the lysosome. The protein localises to the secreted. It is found in the apical cell membrane. It catalyses the reaction Broad proteolytic activity. With small-molecule substrates and inhibitors, the major determinant of specificity is P2, which is preferably Leu, Met &gt; Phe, and not Arg.. Its function is as follows. Thiol protease involved in osteoclastic bone resorption and may participate partially in the disorder of bone remodeling. Displays potent endoprotease activity against fibrinogen at acid pH. May play an important role in extracellular matrix degradation. Involved in the release of thyroid hormone thyroxine (T4) by limited proteolysis of TG/thyroglobulin in the thyroid follicle lumen. In Macaca fascicularis (Crab-eating macaque), this protein is Cathepsin K (CTSK).